The chain runs to 2099 residues: Dedicator of cytokinesis protein 8 (2099 aa).

Phosphoserine is present on residues serine 20, serine 139, and serine 451. The 170-residue stretch at 560-729 folds into the C2 DOCK-type domain; sequence RNLLYVYPQR…GVFNIEVQAV (170 aa). Residues serine 904, serine 936, serine 1145, and serine 1243 each carry the phosphoserine modification. In terms of domain architecture, DOCKER spans 1632 to 2066; it reads KSYQASPDLR…LRPMIERKIP (435 aa). Serine 2087 carries the post-translational modification Phosphoserine.

Belongs to the DOCK family. Interacts (via DOCKER domain) with GTPase CDC42; the interaction activates CDC42 by exchanging GDP for GTP. The unphosphorylated form interacts (via DOCKER domain) with LRCH1 (via LRR repeats); the interaction prevents the association between DOCK8 and CDC42. Interacts with CCDC88B. In terms of processing, in response to chemokine CXCL12/SDF-1-alpha stimulation, phosphorylated by PRKCA/PKC-alpha which promotes DOCK8 dissociation from LRCH1. Expressed in peripheral blood mononuclear cells (PBMCs).

The protein localises to the cytoplasm. Its subcellular location is the cell membrane. The protein resides in the cell projection. It localises to the lamellipodium membrane. Functionally, guanine nucleotide exchange factor (GEF) which specifically activates small GTPase CDC42 by exchanging bound GDP for free GTP. During immune responses, required for interstitial dendritic cell (DC) migration by locally activating CDC42 at the leading edge membrane of DC. Required for CD4(+) T-cell migration in response to chemokine stimulation by promoting CDC42 activation at T cell leading edge membrane. Is involved in NK cell cytotoxicity by controlling polarization of microtubule-organizing center (MTOC), and possibly regulating CCDC88B-mediated lytic granule transport to MTOC during cell killing. This chain is Dedicator of cytokinesis protein 8 (DOCK8), found in Homo sapiens (Human).